A 1331-amino-acid polypeptide reads, in one-letter code: Xanthine dehydrogenase/oxidase (1331 aa).

The 88-residue stretch at 4-91 folds into the 2Fe-2S ferredoxin-type domain; that stretch reads DELVFFVNGK…HVAVTTVEGI (88 aa). [2Fe-2S] cluster contacts are provided by C43, C48, C51, C73, C112, C115, C147, and C149. An FAD-binding PCMH-type domain is found at 228 to 413; it reads FEGERVTWIQ…LSIEIPYSKE (186 aa). Residues 256 to 263, F336, 346 to 350, D359, L403, and K421 contribute to the FAD site; these read LVVGNTEI and SIGGN. The cysteines at positions 535 and 992 are disulfide-linked. 2 residues coordinate Mo-molybdopterin: Q767 and F798. 2 residues coordinate substrate: E802 and R880. R912 lines the Mo-molybdopterin pocket. Substrate contacts are provided by F914 and T1010. A1079 provides a ligand contact to Mo-molybdopterin. The active-site Proton acceptor is E1261.

It belongs to the xanthine dehydrogenase family. Homodimer. Interacts with BTN1A1. Requires [2Fe-2S] cluster as cofactor. The cofactor is FAD. It depends on Mo-molybdopterin as a cofactor. In terms of processing, subject to partial proteolysis; this alters the enzyme from the dehydrogenase form (D) to the oxidase form (O). Post-translationally, contains sulfhydryl groups that are easily oxidized (in vitro); this alters the enzyme from the dehydrogenase form (D) to the oxidase form (O).

The protein localises to the peroxisome. It is found in the cytoplasm. The protein resides in the secreted. It carries out the reaction xanthine + NAD(+) + H2O = urate + NADH + H(+). The catalysed reaction is hypoxanthine + NAD(+) + H2O = xanthine + NADH + H(+). It catalyses the reaction xanthine + O2 + H2O = urate + H2O2. Can be converted from the dehydrogenase form (D) to the oxidase form (O) irreversibly by proteolysis or reversibly through the oxidation of sulfhydryl groups. Key enzyme in purine degradation. Catalyzes the oxidation of hypoxanthine to xanthine. Catalyzes the oxidation of xanthine to uric acid. Contributes to the generation of reactive oxygen species. In Rattus norvegicus (Rat), this protein is Xanthine dehydrogenase/oxidase (Xdh).